We begin with the raw amino-acid sequence, 822 residues long: Putative ESX-1 scaffolding and assembly protein SaeB (822 aa).

Functionally, may be involved in assembly of the ESX-1 / type VII specialized secretion system (T7SS), which exports several proteins including EsxA and EsxB. Involved in DNA conjugation in recipient (MDK8) but not donor (mc(2)155) strain. In Mycolicibacterium smegmatis (strain ATCC 700084 / mc(2)155) (Mycobacterium smegmatis), this protein is Putative ESX-1 scaffolding and assembly protein SaeB.